A 184-amino-acid chain; its full sequence is Elongation factor P (184 aa).

It belongs to the elongation factor P family.

The protein resides in the cytoplasm. It participates in protein biosynthesis; polypeptide chain elongation. Its function is as follows. Involved in peptide bond synthesis. Stimulates efficient translation and peptide-bond synthesis on native or reconstituted 70S ribosomes in vitro. Probably functions indirectly by altering the affinity of the ribosome for aminoacyl-tRNA, thus increasing their reactivity as acceptors for peptidyl transferase. The polypeptide is Elongation factor P (Verminephrobacter eiseniae (strain EF01-2)).